A 107-amino-acid chain; its full sequence is Putative ankyrin repeat protein L14 (107 aa).

ANK repeat units lie at residues 19–48, 49–78, and 80–107; these read DNNY…NIRA, DNDC…NIRA, and NDCA…AVLS.

In Acanthamoeba polyphaga (Amoeba), this protein is Putative ankyrin repeat protein L14.